A 190-amino-acid chain; its full sequence is UPF0301 protein PSPPH_0476 (190 aa).

Belongs to the UPF0301 (AlgH) family.

The chain is UPF0301 protein PSPPH_0476 from Pseudomonas savastanoi pv. phaseolicola (strain 1448A / Race 6) (Pseudomonas syringae pv. phaseolicola (strain 1448A / Race 6)).